Reading from the N-terminus, the 73-residue chain is UPF0352 protein HD_1515 (73 aa).

This sequence belongs to the UPF0352 family.

This chain is UPF0352 protein HD_1515, found in Haemophilus ducreyi (strain 35000HP / ATCC 700724).